A 372-amino-acid chain; its full sequence is Dual-specificity RNA methyltransferase RlmN (372 aa).

Glutamate 94 serves as the catalytic Proton acceptor. The 240-residue stretch at 100-339 (DGDRATLCVS…VTIRKTRGDD (240 aa)) folds into the Radical SAM core domain. A disulfide bridge links cysteine 107 with cysteine 344. Positions 114, 118, and 121 each coordinate [4Fe-4S] cluster. S-adenosyl-L-methionine is bound by residues 168–169 (GE), serine 200, 222–224 (SLH), and asparagine 301. The S-methylcysteine intermediate role is filled by cysteine 344.

It belongs to the radical SAM superfamily. RlmN family. Requires [4Fe-4S] cluster as cofactor.

The protein resides in the cytoplasm. The enzyme catalyses adenosine(2503) in 23S rRNA + 2 reduced [2Fe-2S]-[ferredoxin] + 2 S-adenosyl-L-methionine = 2-methyladenosine(2503) in 23S rRNA + 5'-deoxyadenosine + L-methionine + 2 oxidized [2Fe-2S]-[ferredoxin] + S-adenosyl-L-homocysteine. It carries out the reaction adenosine(37) in tRNA + 2 reduced [2Fe-2S]-[ferredoxin] + 2 S-adenosyl-L-methionine = 2-methyladenosine(37) in tRNA + 5'-deoxyadenosine + L-methionine + 2 oxidized [2Fe-2S]-[ferredoxin] + S-adenosyl-L-homocysteine. Functionally, specifically methylates position 2 of adenine 2503 in 23S rRNA and position 2 of adenine 37 in tRNAs. m2A2503 modification seems to play a crucial role in the proofreading step occurring at the peptidyl transferase center and thus would serve to optimize ribosomal fidelity. This is Dual-specificity RNA methyltransferase RlmN from Aliivibrio fischeri (strain MJ11) (Vibrio fischeri).